The chain runs to 298 residues: Junctional adhesion molecule A (298 aa).

The N-terminal stretch at 1–28 (MGTEARAGRRQLLVFTSVVLSSLALGRG) is a signal peptide. Ig-like V-type domains are found at residues 29–126 (AVYT…VQLT) and 134–227 (PTVH…EAVR). Over 29–237 (AVYTSEPDVR…MEAAELNVGG (209 aa)) the chain is Extracellular. Cystine bridges form between cysteine 49/cysteine 108 and cysteine 152/cysteine 211. Asparagine 184 is a glycosylation site (N-linked (GlcNAc...) asparagine). Residues 238 to 258 (IVAAVLVTLILLGFLILGIWF) form a helical membrane-spanning segment. Over 259 to 298 (AYRRGYFDRTKKGTSSKKVIYSQPAARSEGEFRQTSSFLV) the chain is Cytoplasmic. A phosphoserine mark is found at serine 280 and serine 286.

This sequence belongs to the immunoglobulin superfamily. Interacts with the ninth PDZ domain of MPDZ. Interacts with the first PDZ domain of PARD3. The association between PARD3 and PARD6B probably disrupts this interaction. Interacts with ITGAL (via I-domain). Interacts with CD151. As to quaternary structure, (Microbial infection) Interacts with calicivirus capsid protein. In terms of assembly, (Microbial infection) Interacts with the orthoreovirus sigma-1 capsid protein.

The protein resides in the cell junction. Its subcellular location is the tight junction. The protein localises to the cell membrane. In terms of biological role, seems to play a role in epithelial tight junction formation. Appears early in primordial forms of cell junctions and recruits PARD3. The association of the PARD6-PARD3 complex may prevent the interaction of PARD3 with JAM1, thereby preventing tight junction assembly. Plays a role in regulating monocyte transmigration involved in integrity of epithelial barrier. Ligand for integrin alpha-L/beta-2 involved in memory T-cell and neutrophil transmigration. Involved in platelet activation. Its function is as follows. (Microbial infection) Acts as a functional receptor for murine norovirus. Functionally, (Microbial infection) In case of orthoreovirus infection, serves as receptor for the virus. This is Junctional adhesion molecule A (F11R) from Felis catus (Cat).